We begin with the raw amino-acid sequence, 752 residues long: Putative xanthine dehydrogenase molybdenum-binding subunit XdhA (752 aa).

The Mo-molybdopterin site is built by glutamine 206, phenylalanine 237, arginine 350, and alanine 516.

Belongs to the xanthine dehydrogenase family. Heterotrimer of XdhA, XdhB and XdhC. Mo-molybdopterin serves as cofactor.

The enzyme catalyses xanthine + NAD(+) + H2O = urate + NADH + H(+). It carries out the reaction hypoxanthine + NAD(+) + H2O = xanthine + NADH + H(+). Its pathway is purine metabolism; hypoxanthine degradation; urate from hypoxanthine: step 1/2. It participates in purine metabolism; hypoxanthine degradation; urate from hypoxanthine: step 2/2. Presumed to be a dehydrogenase, but possibly an oxidase. Participates in limited purine salvage (requires aspartate) but does not support aerobic growth on purines as the sole carbon source (purine catabolism). Deletion results in increased adenine sensitivity, suggesting that this protein contributes to the conversion of adenine to guanine nucleotides during purine salvage. This is Putative xanthine dehydrogenase molybdenum-binding subunit XdhA (xdhA) from Escherichia coli (strain K12).